A 547-amino-acid chain; its full sequence is T-complex protein 1 subunit alpha (547 aa).

Belongs to the TCP-1 chaperonin family. As to quaternary structure, heterooligomeric complex of about 850 to 900 kDa that forms two stacked rings, 12 to 16 nm in diameter.

The protein localises to the cytoplasm. In terms of biological role, molecular chaperone; assists the folding of proteins upon ATP hydrolysis. Known to play a role, in vitro, in the folding of actin and tubulin. This Tetrahymena pyriformis protein is T-complex protein 1 subunit alpha.